The sequence spans 390 residues: Chitinase-3-like protein 2 (390 aa).

Positions 1 to 26 (MGATTMDQKSLWAGVVVLLLLQGGSA) are cleaved as a signal peptide. The 364-residue stretch at 27–390 (YKLVCYFTNW…QAVKRSLGSL (364 aa)) folds into the GH18 domain. Cys31 and Cys56 form a disulfide bridge. Asn35 carries N-linked (GlcNAc...) asparagine glycosylation. Chitin-binding positions include 75–76 (DK), 102–105 (GGYL), Tyr104, Tyr146, 210–213 (LSFD), Asp213, and Trp360.

It belongs to the glycosyl hydrolase 18 family. In terms of tissue distribution, highest expression in chondrocytes, followed by synoviocytes, lung and heart. Not detected in spleen, pancreas, and liver. May also be expressed in developing brain and placenta.

Its subcellular location is the secreted. Functionally, lectin that binds chitooligosaccharides and other glycans with high affinity, but not heparin. Has no chitinase activity. This chain is Chitinase-3-like protein 2 (CHI3L2), found in Homo sapiens (Human).